The primary structure comprises 87 residues: uncharacterized protein (87 aa).

Residues 21 to 41 (LSSSLYSVAFFLFFFPNFLFF) traverse the membrane as a helical segment.

The protein localises to the membrane. This is an uncharacterized protein from Saccharomyces cerevisiae (strain ATCC 204508 / S288c) (Baker's yeast).